The primary structure comprises 330 residues: Fructose-1,6-bisphosphatase class 1 (330 aa).

Glutamate 84, aspartate 103, leucine 105, and aspartate 106 together coordinate Mg(2+). Substrate contacts are provided by residues 106–109 (DGSS), asparagine 196, and lysine 262. Mg(2+) is bound at residue glutamate 268.

The protein belongs to the FBPase class 1 family. As to quaternary structure, homotetramer. Requires Mg(2+) as cofactor.

The protein localises to the cytoplasm. The catalysed reaction is beta-D-fructose 1,6-bisphosphate + H2O = beta-D-fructose 6-phosphate + phosphate. It participates in carbohydrate biosynthesis; gluconeogenesis. This chain is Fructose-1,6-bisphosphatase class 1, found in Shewanella sp. (strain ANA-3).